The sequence spans 537 residues: Chaperonin GroEL 2 (537 aa).

ATP is bound by residues 29–32, 86–90, Gly-412, and Asp-495; these read TLGP and DGTTT.

Belongs to the chaperonin (HSP60) family. Forms a cylinder of 14 subunits composed of two heptameric rings stacked back-to-back. Interacts with the co-chaperonin GroES.

Its subcellular location is the cytoplasm. It catalyses the reaction ATP + H2O + a folded polypeptide = ADP + phosphate + an unfolded polypeptide.. In terms of biological role, together with its co-chaperonin GroES, plays an essential role in assisting protein folding. The GroEL-GroES system forms a nano-cage that allows encapsulation of the non-native substrate proteins and provides a physical environment optimized to promote and accelerate protein folding. The polypeptide is Chaperonin GroEL 2 (Paenarthrobacter aurescens (strain TC1)).